The chain runs to 270 residues: Probable septum site-determining protein MinC (270 aa).

Residues 105 to 129 (DRRAPSSKAADEAPVQQAEPAAPAA) form a disordered region. Residues 116-129 (EAPVQQAEPAAPAA) show a composition bias toward low complexity.

This sequence belongs to the MinC family. Interacts with MinD and FtsZ.

Its function is as follows. Cell division inhibitor that blocks the formation of polar Z ring septums. Rapidly oscillates between the poles of the cell to destabilize FtsZ filaments that have formed before they mature into polar Z rings. Prevents FtsZ polymerization. This Burkholderia pseudomallei (strain 1106a) protein is Probable septum site-determining protein MinC.